A 119-amino-acid chain; its full sequence is Protein TusC (119 aa).

Belongs to the DsrF/TusC family. As to quaternary structure, heterohexamer, formed by a dimer of trimers. The hexameric TusBCD complex contains 2 copies each of TusB, TusC and TusD. The TusBCD complex interacts with TusE.

It is found in the cytoplasm. Functionally, part of a sulfur-relay system required for 2-thiolation of 5-methylaminomethyl-2-thiouridine (mnm(5)s(2)U) at tRNA wobble positions. The polypeptide is Protein TusC (Buchnera aphidicola subsp. Schizaphis graminum (strain Sg)).